Here is a 390-residue protein sequence, read N- to C-terminus: Elongation factor Ts 2, mitochondrial (390 aa).

The N-terminal 24 residues, Met1 to Ala24, are a transit peptide targeting the mitochondrion. The span at Ser30–Ser40 shows a compositional bias: low complexity. The disordered stretch occupies residues Ser30–Gln54.

This sequence belongs to the EF-Ts family.

Its subcellular location is the mitochondrion. Associates with the EF-Tu.GDP complex and induces the exchange of GDP to GTP. It remains bound to the aminoacyl-tRNA.EF-Tu.GTP complex up to the GTP hydrolysis stage on the ribosome. The sequence is that of Elongation factor Ts 2, mitochondrial from Thalassiosira pseudonana (Marine diatom).